Consider the following 529-residue polypeptide: T-complex protein 1 subunit delta (529 aa).

This sequence belongs to the TCP-1 chaperonin family. As to quaternary structure, heterooligomeric complex of about 850 to 900 kDa that forms two stacked rings, 12 to 16 nm in diameter.

The protein localises to the cytoplasm. Molecular chaperone; assists the folding of proteins upon ATP hydrolysis. Known to play a role, in vitro, in the folding of actin and tubulin. This is T-complex protein 1 subunit delta (CCT4) from Candida glabrata (strain ATCC 2001 / BCRC 20586 / JCM 3761 / NBRC 0622 / NRRL Y-65 / CBS 138) (Yeast).